A 1203-amino-acid chain; its full sequence is Serine/threonine-protein kinase Nek1 (1203 aa).

Residues 4–258 (YVRLQKIGEG…VNSILEKGFI (255 aa)) form the Protein kinase domain. ATP is bound by residues 10–18 (IGEGSFGKA) and Lys33. Catalysis depends on Asp128, which acts as the Proton acceptor. The residue at position 156 (Thr156) is a Phosphothreonine. Position 162 is a phosphothreonine; by autocatalysis (Thr162). The disordered stretch occupies residues 329–357 (LLEKKPPPKHKQAHQIPVKKMNSGEERKK). Phosphoserine is present on residues Ser417 and Ser437. Thr615 bears the Phosphothreonine mark. A Phosphoserine modification is found at Ser618. Disordered stretches follow at residues 643 to 662 (LTDT…SSKR) and 674 to 708 (AQED…ISSD). Basic and acidic residues predominate over residues 674-683 (AQEDEKEKQH). 4 positions are modified to phosphoserine: Ser750, Ser786, Ser820, and Ser832. Disordered regions lie at residues 814–866 (PSAT…LPPV) and 888–925 (AVQQ…GCDV). Residues 839-850 (NVEEPDDLETEV) show a composition bias toward acidic residues. Ser997 carries the phosphoserine modification. Disordered regions lie at residues 1021-1045 (SLEI…TVFE) and 1063-1120 (REQP…ETTS). Residue Ser1071 is modified to Phosphoserine.

It belongs to the protein kinase superfamily. NEK Ser/Thr protein kinase family. NIMA subfamily. In terms of assembly, binds to CBY2. Found in a complex with CFAP410, NEK1 and SPATA7. Interacts with CFAP410. Interacts (via Ser-997 phosphorylated form) with 14-3-3 proteins. It depends on Mg(2+) as a cofactor. As to expression, predominantly in testes (germ cells and Sertoli cells). Lower levels in ovary (oocytes and granulosa cells), thymus and lung.

It localises to the nucleus. It is found in the cytoplasm. The protein localises to the cytoskeleton. Its subcellular location is the microtubule organizing center. The protein resides in the centrosome. It carries out the reaction L-seryl-[protein] + ATP = O-phospho-L-seryl-[protein] + ADP + H(+). The enzyme catalyses L-threonyl-[protein] + ATP = O-phospho-L-threonyl-[protein] + ADP + H(+). Functionally, phosphorylates serines and threonines, but also appears to possess tyrosine kinase activity. Involved in DNA damage checkpoint control and for proper DNA damage repair. In response to injury that includes DNA damage, NEK1 phosphorylates VDAC1 to limit mitochondrial cell death. May be implicated in the control of meiosis. Involved in cilium assembly. This chain is Serine/threonine-protein kinase Nek1 (Nek1), found in Mus musculus (Mouse).